A 56-amino-acid chain; its full sequence is Large ribosomal subunit protein bL33 (56 aa).

Belongs to the bacterial ribosomal protein bL33 family.

The sequence is that of Large ribosomal subunit protein bL33 from Nocardioides sp. (strain ATCC BAA-499 / JS614).